Consider the following 429-residue polypeptide: MKKQNNLRSLAAQAVEQVVEQGQSLSNVLPPLQQKVADKDKALLQELCFGVLRTLSQLEWLINKLMSRPMTGKQRTVHYLIMVGFYQLLYTRVPPHAALAETVEGAVSIKRPQLKGLINGVLRQFQRQQETLLNEFATSDARFLHPGWLVKRLQNAYPTQWQHIIEANNQRPPMWLRVNRTHHTRDGWLGLLEDAGMKGYPHPDYPDAVRLETPAPVHALPGFAEGWVTVQDASAQKCVAFLAPQNGEHILDLCAAPGGKTTHILEAAPEADVLAVDVDEQRLSRIYDNLKRLGMKATVKQGDGRYPAQWCDEQQFDRILLDAPCSATGVIRRHPDIKWLRRDRDIAELAKLQAEILDTVWPRLKPGGTLVYATCSVLPEENSAQINAFLQRTPDAALSETGTPDQPGQQNLPGAEEGDGFFYAKLIKK.

S-adenosyl-L-methionine contacts are provided by residues 254 to 260, D277, D303, and D322; that span reads CAAPGGK. The active-site Nucleophile is C375.

Belongs to the class I-like SAM-binding methyltransferase superfamily. RsmB/NOP family.

The protein resides in the cytoplasm. It carries out the reaction cytidine(967) in 16S rRNA + S-adenosyl-L-methionine = 5-methylcytidine(967) in 16S rRNA + S-adenosyl-L-homocysteine + H(+). Specifically methylates the cytosine at position 967 (m5C967) of 16S rRNA. This Salmonella arizonae (strain ATCC BAA-731 / CDC346-86 / RSK2980) protein is Ribosomal RNA small subunit methyltransferase B.